Reading from the N-terminus, the 446-residue chain is Nucleoprotein (446 aa).

Residues Met1 to Ala54 form a disordered region. The span at Ser9–Gly22 shows a compositional bias: low complexity. Polar residues-rich tracts occupy residues Gln29–Thr38 and Pro45–Ala54. Positions Gln52–Ser193 are RNA-binding. One can recognise a CoV N NTD domain in the interval Pro60 to Gly189. RNA is bound by residues Arg105, Arg121, and Arg163. 3 disordered regions span residues Pro157–Asp230, Ile265–Pro290, and Gln381–Met446. Position 166 is a phosphoserine; by host (Ser166). A Phosphothreonine; by host modification is found at Thr173. At Ser190 the chain carries Phosphoserine; by host. Positions Pro195–Gly226 are enriched in low complexity. The CoV N CTD domain occupies Ala258–Asp383. Residues Ile265–Pro275 are compositionally biased toward basic residues. The segment at Ile265–Asp384 is dimerization. Residues Ser389 and Ser421 each carry the phosphoserine; by host modification. Position 425 is a phosphothreonine; by host (Thr425).

This sequence belongs to the betacoronavirus nucleocapsid protein family. In terms of assembly, homooligomer. Both monomeric and oligomeric forms interact with RNA. Interacts with protein M. Interacts with NSP3; this interaction serves to tether the genome to the newly translated replicase-transcriptase complex at a very early stage of infection. ADP-ribosylated. The ADP-ribosylation is retained in the virion during infection. In terms of processing, phosphorylated on serine and threonine residues.

The protein resides in the virion. It is found in the host endoplasmic reticulum-Golgi intermediate compartment. Its subcellular location is the host Golgi apparatus. Packages the positive strand viral genome RNA into a helical ribonucleocapsid (RNP) and plays a fundamental role during virion assembly through its interactions with the viral genome and membrane protein M. Plays an important role in enhancing the efficiency of subgenomic viral RNA transcription as well as viral replication. This is Nucleoprotein from Equine coronavirus (isolate NC99) (ECoV).